We begin with the raw amino-acid sequence, 155 residues long: uncharacterized protein (155 aa).

A signal peptide spans Met-1–Ala-23.

It to E.coli YkfB.

This is an uncharacterized protein from Escherichia coli (strain K12).